The primary structure comprises 220 residues: Deoxyribose-phosphate aldolase (220 aa).

Residue Asp-89 is the Proton donor/acceptor of the active site. The Schiff-base intermediate with acetaldehyde role is filled by Lys-151. Catalysis depends on Lys-180, which acts as the Proton donor/acceptor.

This sequence belongs to the DeoC/FbaB aldolase family. DeoC type 1 subfamily.

Its subcellular location is the cytoplasm. The enzyme catalyses 2-deoxy-D-ribose 5-phosphate = D-glyceraldehyde 3-phosphate + acetaldehyde. It participates in carbohydrate degradation; 2-deoxy-D-ribose 1-phosphate degradation; D-glyceraldehyde 3-phosphate and acetaldehyde from 2-deoxy-alpha-D-ribose 1-phosphate: step 2/2. In terms of biological role, catalyzes a reversible aldol reaction between acetaldehyde and D-glyceraldehyde 3-phosphate to generate 2-deoxy-D-ribose 5-phosphate. This Streptococcus pneumoniae serotype 4 (strain ATCC BAA-334 / TIGR4) protein is Deoxyribose-phosphate aldolase.